A 151-amino-acid chain; its full sequence is Deoxyuridine 5'-triphosphate nucleotidohydrolase (151 aa).

Substrate-binding positions include 70–72 (RSG), Asn-83, 87–89 (LID), and Met-97.

This sequence belongs to the dUTPase family. Requires Mg(2+) as cofactor.

It carries out the reaction dUTP + H2O = dUMP + diphosphate + H(+). It functions in the pathway pyrimidine metabolism; dUMP biosynthesis; dUMP from dCTP (dUTP route): step 2/2. Its function is as follows. This enzyme is involved in nucleotide metabolism: it produces dUMP, the immediate precursor of thymidine nucleotides and it decreases the intracellular concentration of dUTP so that uracil cannot be incorporated into DNA. This chain is Deoxyuridine 5'-triphosphate nucleotidohydrolase, found in Pseudomonas paraeruginosa (strain DSM 24068 / PA7) (Pseudomonas aeruginosa (strain PA7)).